Consider the following 252-residue polypeptide: Eukaryotic translation initiation factor 3 subunit J (252 aa).

Disordered stretches follow at residues 24-107 (VPAG…TPEE) and 209-232 (KQSK…TMKD). Positions 36–56 (EDEEDDVKDNWDDEEEEEEVK) are enriched in acidic residues. Residues 57-107 (EAEVKQEPKVSEKKKIAEKIKEKEKQQKKKQEELKKRLEAPEEHKELTPEE) show a composition bias toward basic and acidic residues. The stretch at 65–130 (KVSEKKKIAE…ESDLELAKET (66 aa)) forms a coiled coil.

It belongs to the eIF-3 subunit J family. As to quaternary structure, component of the eukaryotic translation initiation factor 3 (eIF-3) complex, which is composed of 13 subunits: EIF3A, EIF3B, EIF3C, EIF3D, EIF3E, EIF3F, EIF3G, EIF3H, EIF3I, EIF3J, EIF3K, EIF3L and EIF3M.

Its subcellular location is the cytoplasm. In terms of biological role, component of the eukaryotic translation initiation factor 3 (eIF-3) complex, which is involved in protein synthesis of a specialized repertoire of mRNAs and, together with other initiation factors, stimulates binding of mRNA and methionyl-tRNAi to the 40S ribosome. The eIF-3 complex specifically targets and initiates translation of a subset of mRNAs involved in cell proliferation. The protein is Eukaryotic translation initiation factor 3 subunit J of Gallus gallus (Chicken).